The sequence spans 131 residues: M-zodatoxin-Lt8m (131 aa).

A signal peptide spans 1-20; it reads MKYFVVALALVAAFACIAES. The propeptide occupies 21 to 60; the sequence is KPAESEHELAEVEEENELADLEDAVWLEHLADLSDLEEAR.

Belongs to the cationic peptide 06 (cytoinsectotoxin) family. In terms of tissue distribution, expressed by the venom gland.

It is found in the secreted. Functionally, insecticidal, cytolytic and antimicrobial peptide. Forms voltage-dependent, ion-permeable channels in membranes. At high concentration causes cell membrane lysis. The protein is M-zodatoxin-Lt8m (cit 1-13) of Lachesana tarabaevi (Spider).